The primary structure comprises 542 residues: CTP synthase (542 aa).

The segment at 1–265 (MTRYVFITGG…DREVLALFGI (265 aa)) is amidoligase domain. Ser-13 lines the CTP pocket. Ser-13 serves as a coordination point for UTP. ATP-binding positions include 14–19 (SLGKGL) and Asp-71. Mg(2+)-binding residues include Asp-71 and Glu-139. CTP-binding positions include 146-148 (DIE), 186-191 (KTKPTQ), and Lys-222. Residues 186 to 191 (KTKPTQ) and Lys-222 each bind UTP. Residue 238–240 (RDV) coordinates ATP. A Glutamine amidotransferase type-1 domain is found at 291–541 (SIAIVGKYTG…IGAAVVQSRL (251 aa)). Gly-353 contacts L-glutamine. Catalysis depends on Cys-380, which acts as the Nucleophile; for glutamine hydrolysis. Residues 381-384 (FGMQ), Glu-404, and Arg-469 each bind L-glutamine. Catalysis depends on residues His-514 and Glu-516.

It belongs to the CTP synthase family. In terms of assembly, homotetramer.

The catalysed reaction is UTP + L-glutamine + ATP + H2O = CTP + L-glutamate + ADP + phosphate + 2 H(+). It catalyses the reaction L-glutamine + H2O = L-glutamate + NH4(+). The enzyme catalyses UTP + NH4(+) + ATP = CTP + ADP + phosphate + 2 H(+). The protein operates within pyrimidine metabolism; CTP biosynthesis via de novo pathway; CTP from UDP: step 2/2. Allosterically activated by GTP, when glutamine is the substrate; GTP has no effect on the reaction when ammonia is the substrate. The allosteric effector GTP functions by stabilizing the protein conformation that binds the tetrahedral intermediate(s) formed during glutamine hydrolysis. Inhibited by the product CTP, via allosteric rather than competitive inhibition. Its function is as follows. Catalyzes the ATP-dependent amination of UTP to CTP with either L-glutamine or ammonia as the source of nitrogen. Regulates intracellular CTP levels through interactions with the four ribonucleotide triphosphates. The chain is CTP synthase from Methylobacterium nodulans (strain LMG 21967 / CNCM I-2342 / ORS 2060).